Consider the following 312-residue polypeptide: Large ribosomal subunit protein uL10 (312 aa).

The interval 287–312 (AAAAPAAKKEEPKEESDDDMGFGLFD) is disordered.

The protein belongs to the universal ribosomal protein uL10 family. P0 forms a pentameric complex by interaction with dimers of P1 and P2. In terms of processing, phosphorylated.

Ribosomal protein P0 is the functional equivalent of E.coli protein L10. This chain is Large ribosomal subunit protein uL10, found in Caenorhabditis elegans.